The sequence spans 486 residues: Hexokinase-2 (486 aa).

A Phosphoserine modification is found at Ser15. The Hexokinase domain maps to 21–469 (KELMQQIENF…SGAGAAVIAA (449 aa)). Thr38 bears the Phosphothreonine mark. The hexokinase small subdomain stretch occupies residues 75–209 (TGKESGDFLA…NIPIEVVALI (135 aa)). ATP is bound by residues 86-91 (DLGGTN) and Lys111. Phosphoserine is present on Ser158. Residues Ser158, 175–176 (TK), 210–211 (ND), and Asn237 each bind substrate. The hexokinase large subdomain stretch occupies residues 210-458 (NDTTGTLVAS…YPIKIVPAED (249 aa)). At Ser245 the chain carries Phosphoserine. Glu269 provides a ligand contact to substrate. Ser272 is modified (phosphoserine). Glu302 is a binding site for substrate. Residues 307 to 308 (GY), 344 to 348 (TSYPA), and 419 to 423 (SVYNR) each bind ATP.

The protein belongs to the hexokinase family. As to quaternary structure, homodimer.

It carries out the reaction a D-hexose + ATP = a D-hexose 6-phosphate + ADP + H(+). It catalyses the reaction D-fructose + ATP = D-fructose 6-phosphate + ADP + H(+). The catalysed reaction is D-glucose + ATP = D-glucose 6-phosphate + ADP + H(+). The protein operates within carbohydrate metabolism; hexose metabolism. It functions in the pathway carbohydrate degradation; glycolysis; D-glyceraldehyde 3-phosphate and glycerone phosphate from D-glucose: step 1/4. Subject to allosteric control. Substrate inhibition by ATP. Catalyzes the phosphorylation of hexose, such as D-glucose and D-fructose, to hexose 6-phosphate (D-glucose 6-phosphate and D-fructose 6-phosphate, respectively). Mediates the initial step of glycolysis by catalyzing phosphorylation of D-glucose to D-glucose 6-phosphate. The polypeptide is Hexokinase-2 (HXK2) (Saccharomyces cerevisiae (strain ATCC 204508 / S288c) (Baker's yeast)).